The chain runs to 143 residues: Holo-[acyl-carrier-protein] synthase (143 aa).

D8 and E62 together coordinate Mg(2+).

This sequence belongs to the P-Pant transferase superfamily. AcpS family. Mg(2+) is required as a cofactor.

Its subcellular location is the cytoplasm. The catalysed reaction is apo-[ACP] + CoA = holo-[ACP] + adenosine 3',5'-bisphosphate + H(+). Transfers the 4'-phosphopantetheine moiety from coenzyme A to a Ser of acyl-carrier-protein. This is Holo-[acyl-carrier-protein] synthase from Cupriavidus metallidurans (strain ATCC 43123 / DSM 2839 / NBRC 102507 / CH34) (Ralstonia metallidurans).